Reading from the N-terminus, the 298-residue chain is Fluorinase (298 aa).

S-adenosyl-L-methionine-binding positions include Asp-14, 19–21 (DDS), Tyr-75, Ser-156, Asp-209, Asn-214, 268–269 (SR), and 276–278 (RNA).

It belongs to the SAM hydrolase / SAM-dependent halogenase family.

The enzyme catalyses fluoride + S-adenosyl-L-methionine = 5'-deoxy-5'-fluoroadenosine + L-methionine. Functionally, catalyzes the formation of a C-F bond by combining S-adenosyl-L-methionine (SAM) and fluoride to generate 5'-fluoro-5'-deoxyadenosine (5'-FDA) and L-methionine. The polypeptide is Fluorinase (Actinoplanes sp. (strain N902-109)).